Here is a 715-residue protein sequence, read N- to C-terminus: Polyribonucleotide nucleotidyltransferase (715 aa).

Mg(2+)-binding residues include aspartate 493 and aspartate 499. Residues 560 to 619 (PRMITVKINPEKIRDVIGKGGSVIRALTEETGTTIDISDDGVVTIASTSSEGMAEAKKRI) form the KH domain. The 69-residue stretch at 629–697 (GQVYEGTVLK…EKGRVRLSAK (69 aa)) folds into the S1 motif domain.

It belongs to the polyribonucleotide nucleotidyltransferase family. Requires Mg(2+) as cofactor.

The protein resides in the cytoplasm. It carries out the reaction RNA(n+1) + phosphate = RNA(n) + a ribonucleoside 5'-diphosphate. Involved in mRNA degradation. Catalyzes the phosphorolysis of single-stranded polyribonucleotides processively in the 3'- to 5'-direction. The polypeptide is Polyribonucleotide nucleotidyltransferase (Burkholderia cenocepacia (strain HI2424)).